The chain runs to 58 residues: uncharacterized protein (58 aa).

The chain crosses the membrane as a helical span at residues Trp18 to Glu38.

The protein resides in the membrane. This is an uncharacterized protein from Saccharomyces cerevisiae (strain ATCC 204508 / S288c) (Baker's yeast).